Here is a 317-residue protein sequence, read N- to C-terminus: Eukaryotic translation initiation factor 2 subunit 2 (317 aa).

The disordered stretch occupies residues 1-146 (MSATEEENVL…KEKTITTSDG (146 aa)). Residues 79-90 (AIEKLENEGAHD) are compositionally biased toward basic and acidic residues. Residues 109-125 (KSSTTTTTSTTTTTTEP) are compositionally biased toward low complexity. The C4-type zinc-finger motif lies at 222 to 246 (HVYNYVFAELGTNGSIDGNQRLVIR).

Belongs to the eIF-2-beta/eIF-5 family. In terms of assembly, eukaryotic translation initiation factor 2 eIF2 is a heterotrimeric complex composed of an alpha, a beta and a gamma subunit.

It is found in the cytoplasm. The protein resides in the cytosol. Component of the eIF2 complex that functions in the early steps of protein synthesis by forming a ternary complex with GTP and initiator tRNA. This complex binds to a 40S ribosomal subunit, followed by mRNA binding to form a 43S pre-initiation complex (43S PIC). Junction of the 60S ribosomal subunit to form the 80S initiation complex is preceded by hydrolysis of the GTP bound to eIF2 and release of an eIF2-GDP binary complex. In order for eIF2 to recycle and catalyze another round of initiation, the GDP bound to eIF2 must exchange with GTP by way of a reaction catalyzed by eIF2B. The chain is Eukaryotic translation initiation factor 2 subunit 2 (eif2s2) from Dictyostelium discoideum (Social amoeba).